Reading from the N-terminus, the 313-residue chain is Homoserine O-succinyltransferase (313 aa).

The active-site Acyl-thioester intermediate is cysteine 142. Positions 163 and 192 each coordinate substrate. Catalysis depends on histidine 235, which acts as the Proton acceptor. Glutamate 237 is a catalytic residue. Arginine 249 provides a ligand contact to substrate.

The protein belongs to the MetA family.

It is found in the cytoplasm. It catalyses the reaction L-homoserine + succinyl-CoA = O-succinyl-L-homoserine + CoA. It functions in the pathway amino-acid biosynthesis; L-methionine biosynthesis via de novo pathway; O-succinyl-L-homoserine from L-homoserine: step 1/1. In terms of biological role, transfers a succinyl group from succinyl-CoA to L-homoserine, forming succinyl-L-homoserine. The polypeptide is Homoserine O-succinyltransferase (Shewanella sp. (strain MR-4)).